The chain runs to 349 residues: Protein RecA (349 aa).

An ATP-binding site is contributed by 67–74 (GPESSGKT).

This sequence belongs to the RecA family.

The protein resides in the cytoplasm. Its function is as follows. Can catalyze the hydrolysis of ATP in the presence of single-stranded DNA, the ATP-dependent uptake of single-stranded DNA by duplex DNA, and the ATP-dependent hybridization of homologous single-stranded DNAs. It interacts with LexA causing its activation and leading to its autocatalytic cleavage. The sequence is that of Protein RecA from Chlamydia abortus (strain DSM 27085 / S26/3) (Chlamydophila abortus).